A 107-amino-acid polypeptide reads, in one-letter code: MPYLYLLLSIVSEVIGSAFLKSSDGFSKLYPTITTIISFLICFYFLSKTMQHLPLNITYASWAGLGLVLTTIVSVLIFKEQINLISIISIILIIFGVVLLNTFGSSH.

4 helical membrane-spanning segments follow: residues 1 to 21 (MPYL…AFLK), 26 to 46 (FSKL…FYFL), 57 to 77 (ITYA…SVLI), and 84 to 104 (LISI…NTFG).

It belongs to the drug/metabolite transporter (DMT) superfamily. Small multidrug resistance (SMR) (TC 2.A.7.1) family.

It localises to the cell membrane. Multidrug exporter. Is implicated for the resistance to bacteriocidal quaternary ammonium compounds. The protein is Quaternary ammonium compound-resistance protein QacH (qacH) of Staphylococcus saprophyticus.